The chain runs to 62 residues: Large ribosomal subunit protein uL29 (62 aa).

The protein belongs to the universal ribosomal protein uL29 family.

This is Large ribosomal subunit protein uL29 from Laribacter hongkongensis (strain HLHK9).